The primary structure comprises 766 residues: MSEQLGSHITTPSSHDDASKDKRPAAEVVNGSGIFIMADLHTGKPITLKCGLTLPNRLVKAATAESMAPNNTLPDEKFQNLYRHWAEGGWGMVLAGNVQVDANHICTATDLSVDHSLSDSKIVEAWRPWAAACNGNGTVTVMQLCHPGRQSPAGAGKRGLFAKSIAPSAVALQMGSGLVAKAVTALLFGTPREMSVSDIETVVSQFARSARLAAESGFAGVEVHAGHGFLLEQFLSTKSNRRTDAYGGTPAKRARIVVEVLTAIRAVVPAGFCVGLSLNSVDLQSQTELKDCVEQVKLITDAGVDFIEVSGGTFENPTMFLGPEKSRKQAQLGQPLAHEPFFLDFAKAIRPHVPGVPLIVTGGFRSCQGIEETIAGGDADLVGLARPAVVNPLLPKTTVLSPKTTEFGPEIEDGDVTLYAKKTEAPWILKQIGIRAVEVHIDNSVYHNRRHAAKQVRRASVLLQFPSRPSLSVAAVDIDNVISRLSTARPFVFIFLAITVEVNIDTDIAALLLALRPSPELYHLAAAMPPRRSDGSADHDVPDWPKTPHPTPYDILAMRKDDPYTKHRFFQLVKIYHPDRHGHTPAVHRLPHATRLERYRLIVAANDLLSNPSKRSLYDTQGVGWTGDRPPTLNESVRHAEKSWRHQPGNASRNATWEDWERWYDARDGKTRDPMYMSNGVFATLVVMMCMIGAFAQMSRAEQSGTEYLETRDQSNLAIGQQISRTTLVSAGRSKDERVDSFLRERENVAYEFTPSKYDDRTRTEA.

Polar residues predominate over residues 1–13; that stretch reads MSEQLGSHITTPS. The interval 1-24 is disordered; the sequence is MSEQLGSHITTPSSHDDASKDKRP. The span at 14–24 shows a compositional bias: basic and acidic residues; that stretch reads SHDDASKDKRP. An N-linked (GlcNAc...) asparagine glycan is attached at N30. 61–64 is a binding site for FMN; it reads AATA. Residues N70 and N136 are each glycosylated (N-linked (GlcNAc...) asparagine). FMN is bound at residue Q143. Substrate is bound at residue 224-227; sequence HAGH. 385 to 386 serves as a coordination point for FMN; the sequence is AR. The J domain occupies 551–622; it reads TPYDILAMRK…SKRSLYDTQG (72 aa). 3 N-linked (GlcNAc...) asparagine glycosylation sites follow: N634, N650, and N654. A helical transmembrane segment spans residues 675–695; it reads MYMSNGVFATLVVMMCMIGAF.

The protein belongs to the NADH:flavin oxidoreductase/NADH oxidase family.

It localises to the membrane. Functionally, NADH-dependent flavin oxidoreductase; part of the gene cluster that mediates the biosynthesis of ilicicolin H, a 4-hydroxy-2-pyridonealkaloid that has potent and broad antifungal activities by inhibiting the mitochondrial respiration chain. The biosynthesis of ilicicolin H starts with formation of the tetramic acid by the hybrid PKS-NRPS synthetase iliA with the partnering trans-enoyl reductase iliB since iliA lacks a designated enoylreductase (ER) domain. The cytochrome P450 monooxygenase iliC then catalyzes the ring expansion of the tetramate to the acyclic 2-pyridone. The pericyclase iliD further converts the acyclic 2-pyridone into 8-epi-ilicicolin H. 8-epi-ilicicolin H might then spontaneously convert to ilicicolin H since ilicicolin H is produced in the absence of the epimerase iliE, in contrast to what was observed for the Talaromyces variabilis ilicolin H biosynthetic pathway. This chain is NADH-dependent flavin oxidoreductase iliE, found in Neonectria sp. (strain DH2).